The chain runs to 2602 residues: Filamin-B (2602 aa).

Residues 1 to 239 form an actin-binding region; that stretch reads MPVTEKDLAE…VMTYLSQFPK (239 aa). Calponin-homology (CH) domains lie at 16–122 and 139–242; these read KIQQ…LHYS and QTPK…KAKL. Thr216 bears the Phosphothreonine mark. A disordered region spans residues 244–267; it reads PGAPLKPKLNPKKARAYGRGIEPT. 15 Filamin repeats span residues 249–347, 349–446, 447–543, 544–636, 640–736, 737–839, 840–938, 939–1034, 1035–1127, 1128–1222, 1223–1322, 1323–1415, 1416–1511, 1512–1608, and 1609–1704; these read KPKL…EVNV, KAQG…GVQI, GEAC…EVQV, GPEA…MAFI, TGDY…RVNI, GQGS…RVKV, DPSH…TVGV, AAPL…TVEA, SLPP…KADI, EMPF…WVKV, EPAI…KVAV, TEGC…RVPS, KDVV…KVKV, LPTY…RIRA, and TQTG…TVMA. Thr519 is modified (phosphothreonine). Lys681 is modified (N6-acetyllysine). At Ser730 the chain carries Phosphoserine. Residues 837–850 show a composition bias toward basic and acidic residues; that stretch reads VKVDPSHDASKVKA. A disordered region spans residues 837–862; sequence VKVDPSHDASKVKAEGPGLSKAGVEN. Residues Ser886, Ser932, Ser983, and Ser1028 each carry the phosphoserine modification. Thr1307 bears the Phosphothreonine mark. Ser1316 carries the post-translational modification Phosphoserine. Phosphoserine occurs at positions 1433, 1505, and 1602. The hinge 1 stretch occupies residues 1705–1728; it reads TDGEVTAMEEAPVNACPPGFRPWV. Filamin repeat units lie at residues 1729–1813, 1816–1908, 1919–1994, 1997–2089, 2091–2185, 2188–2280, 2282–2375, and 2379–2471; these read TEEA…SPLQ, VNYP…TAKI, KLGS…SIMV, SEIG…TVKI, GEGR…QFTV, LGEG…LVPV, APSD…KVRV, and GQAG…KAKV. Position 1780 is an N6-acetyllysine (Lys1780). Ser2083 and Ser2113 each carry phosphoserine. Ser2369 and Ser2465 each carry phosphoserine. Lys2468 is covalently cross-linked (Glycyl lysine isopeptide (Lys-Gly) (interchain with G-Cter in ISG15)). The hinge 2 stretch occupies residues 2472–2506; that stretch reads TGQRLVSPGSANETSSILVESVTRSSTETCYSAIP. Positions 2472–2602 are self-association site, tail; the sequence is TGQRLVSPGS…PGSPFHVTVP (131 aa). Phosphoserine occurs at positions 2478, 2481, and 2492. A Filamin 24 repeat occupies 2507-2601; the sequence is KSSSDASKVT…IPGSPFHVTV (95 aa). N6-succinyllysine is present on residues Lys2518 and Lys2524. At Lys2576 the chain carries N6-acetyllysine.

The protein belongs to the filamin family. As to quaternary structure, homodimer. Interacts with FLNA, FLNC, INPPL1, ITGB1A, ITGB1D, ITGB3, ITGB6, MYOT, MYOZ1, PSEN1 and PSEN2. Interacts with MICALL2. Interacts with RFLNA and RFLNB. Interacts with ASB2 isoform 1; the interaction targets FLNB for proteasomal degradation. In terms of processing, ISGylation prevents ability to interact with the upstream activators of the JNK cascade and inhibits IFNA-induced JNK signaling. Ubiquitination by a SCF-like complex containing ASB2 isoform 1 leads to proteasomal degradation which promotes muscle differentiation. Expressed in hippocampus, cortex, cerebellar Purkinje cells and granule cell layers.

It is found in the cytoplasm. The protein localises to the cell cortex. The protein resides in the cytoskeleton. It localises to the stress fiber. Its subcellular location is the myofibril. It is found in the sarcomere. The protein localises to the z line. Connects cell membrane constituents to the actin cytoskeleton. May promote orthogonal branching of actin filaments and links actin filaments to membrane glycoproteins. Anchors various transmembrane proteins to the actin cytoskeleton. This is Filamin-B (Flnb) from Mus musculus (Mouse).